We begin with the raw amino-acid sequence, 102 residues long: NADH-quinone oxidoreductase subunit K (102 aa).

Helical transmembrane passes span 5 to 25 (LSHYLTVSAILFTLGVFGIFL), 31 to 51 (IVILMSIELILLAVNINMVAF), and 65 to 85 (LFILTVAAAEAAIGLAILVVF).

This sequence belongs to the complex I subunit 4L family. As to quaternary structure, NDH-1 is composed of 14 different subunits. Subunits NuoA, H, J, K, L, M, N constitute the membrane sector of the complex.

The protein resides in the cell inner membrane. The enzyme catalyses a quinone + NADH + 5 H(+)(in) = a quinol + NAD(+) + 4 H(+)(out). In terms of biological role, NDH-1 shuttles electrons from NADH, via FMN and iron-sulfur (Fe-S) centers, to quinones in the respiratory chain. The immediate electron acceptor for the enzyme in this species is believed to be ubiquinone. Couples the redox reaction to proton translocation (for every two electrons transferred, four hydrogen ions are translocated across the cytoplasmic membrane), and thus conserves the redox energy in a proton gradient. The polypeptide is NADH-quinone oxidoreductase subunit K (Rhizobium johnstonii (strain DSM 114642 / LMG 32736 / 3841) (Rhizobium leguminosarum bv. viciae)).